The following is a 413-amino-acid chain: RING-H2 finger protein ATL54 (413 aa).

Residues 83 to 103 (ISIITITGAVLAILLTGFFLV) traverse the membrane as a helical segment. The RING-type; atypical zinc-finger motif lies at 177 to 219 (CPVCLNEFEEDESLRLLPKCNHAFHISCIDTWLSSHTNCPLCR). Disordered stretches follow at residues 238–258 (VTPG…EDHG) and 321–413 (THVE…VFPL). The span at 387–401 (SSSTLKTNGSSSSVS) shows a compositional bias: low complexity. A compositionally biased stretch (polar residues) spans 402–413 (CFNKNKSSVFPL).

Belongs to the RING-type zinc finger family. ATL subfamily.

It is found in the membrane. It carries out the reaction S-ubiquitinyl-[E2 ubiquitin-conjugating enzyme]-L-cysteine + [acceptor protein]-L-lysine = [E2 ubiquitin-conjugating enzyme]-L-cysteine + N(6)-ubiquitinyl-[acceptor protein]-L-lysine.. It participates in protein modification; protein ubiquitination. In Arabidopsis thaliana (Mouse-ear cress), this protein is RING-H2 finger protein ATL54 (ATL54).